Consider the following 676-residue polypeptide: Heat shock cognate HSP70 protein (676 aa).

The disordered stretch occupies residues 613-676 (SARREGKDGW…RIEAINANTE (64 aa)). The span at 630 to 646 (GSGDDNDGDDNSDEEDE) shows a compositional bias: acidic residues.

Belongs to the heat shock protein 70 family.

The protein is Heat shock cognate HSP70 protein of Trypanosoma brucei brucei.